The chain runs to 330 residues: MAVTMADITKLRKMTGAGMMDCKNALTDAEGDFDKAMKIIREKGQAVAAKRSDREASEGCVLVKVEEGFGAIIALKCETDFVAQNADFVKLTQDILDAAVANKCKTLEEVLALPMGDATVAQAVTDRTGITGEKMELDGYMVLEGATIAAYNHMNRNGLCTMVAFNKKVDEQLAKQVAMQVAAMNPIAVDEDGVSEEVKQKEIEVAVEKTKVEQVQKAVEAALKKANINPAHVDSEDHMESNMAKGWITAEDVAKAKEIIATVSAEKAANMPEQMIQNIAKGRLAKFLKEVCLLNQEDIMDAKKTVREVLKEADPELKVVDFKRFTLRAE.

The segment at 79 to 82 is involved in Mg(2+) ion dislocation from EF-Tu; sequence TDFV.

Belongs to the EF-Ts family.

It localises to the cytoplasm. In terms of biological role, associates with the EF-Tu.GDP complex and induces the exchange of GDP to GTP. It remains bound to the aminoacyl-tRNA.EF-Tu.GTP complex up to the GTP hydrolysis stage on the ribosome. In Bacteroides fragilis (strain ATCC 25285 / DSM 2151 / CCUG 4856 / JCM 11019 / LMG 10263 / NCTC 9343 / Onslow / VPI 2553 / EN-2), this protein is Elongation factor Ts.